The following is a 235-amino-acid chain: Aspartate/glutamate leucyltransferase (235 aa).

This sequence belongs to the R-transferase family. Bpt subfamily.

The protein resides in the cytoplasm. It carries out the reaction N-terminal L-glutamyl-[protein] + L-leucyl-tRNA(Leu) = N-terminal L-leucyl-L-glutamyl-[protein] + tRNA(Leu) + H(+). The catalysed reaction is N-terminal L-aspartyl-[protein] + L-leucyl-tRNA(Leu) = N-terminal L-leucyl-L-aspartyl-[protein] + tRNA(Leu) + H(+). Functions in the N-end rule pathway of protein degradation where it conjugates Leu from its aminoacyl-tRNA to the N-termini of proteins containing an N-terminal aspartate or glutamate. This Pseudomonas putida (strain W619) protein is Aspartate/glutamate leucyltransferase.